We begin with the raw amino-acid sequence, 591 residues long: Thiol:disulfide interchange protein DsbD 1 (591 aa).

A signal peptide spans 1 to 18 (MRRLLTLILLLVALPAGA). Topologically, residues 19 to 175 (GLFDSRPGAS…GPLEHKGKRS (157 aa)) are periplasmic. 2 disulfides stabilise this stretch: Cys134/Cys140 and Cys191/Cys313. A helical membrane pass occupies residues 176–196 (LLFFFLAGLTLTFTPCVLPML). Residues 197-213 (PILSGVVLRGRPGGGRG) are Cytoplasmic-facing. Residues 214–234 (FVLSLAYVLPMALCFALLGAL) form a helical membrane-spanning segment. The Periplasmic portion of the chain corresponds to 235 to 251 (MGMFGASLNLQAQLQSP). A helical membrane pass occupies residues 252-272 (WVLVPFAAFFALFAVAMFGFF). At 273–295 (ELRLPGFIREPLDRLAGDARGGS) the chain is on the cytoplasmic side. Residues 296-316 (ILGAATLGVLSSLLVSPCVSA) form a helical membrane-spanning segment. The Periplasmic segment spans residues 317–338 (PLAASLLYISASGDAWGGGLQL). The chain crosses the membrane as a helical span at residues 339 to 359 (FALGLGMGTPLVVFGAGGGAL). Residues 360 to 365 (LPKSGA) lie on the Cytoplasmic side of the membrane. The chain crosses the membrane as a helical span at residues 366–386 (WMNGVRNAFGVLLLAVAVWLL). At 387 to 392 (ERVVSG) the chain is on the periplasmic side. Residues 393–413 (PVALMLWGMLAGGAGLALGAL) traverse the membrane as a helical segment. The Cytoplasmic segment spans residues 414–423 (EFTPKSAARR). The helical transmembrane segment at 424–444 (LLQLLGLMFLTYAVAAWIGAL) threads the bilayer. The Periplasmic portion of the chain corresponds to 445 to 591 (QGESDPIHPL…ERLRRAATRQ (147 aa)). Positions 452 to 589 (HPLGRSVPSI…LAERLRRAAT (138 aa)) constitute a Thioredoxin domain. Cysteines 504 and 507 form a disulfide.

It belongs to the thioredoxin family. DsbD subfamily.

It localises to the cell inner membrane. The enzyme catalyses [protein]-dithiol + NAD(+) = [protein]-disulfide + NADH + H(+). It catalyses the reaction [protein]-dithiol + NADP(+) = [protein]-disulfide + NADPH + H(+). Its function is as follows. Required to facilitate the formation of correct disulfide bonds in some periplasmic proteins and for the assembly of the periplasmic c-type cytochromes. Acts by transferring electrons from cytoplasmic thioredoxin to the periplasm. This transfer involves a cascade of disulfide bond formation and reduction steps. The chain is Thiol:disulfide interchange protein DsbD 1 from Pseudomonas aeruginosa (strain ATCC 15692 / DSM 22644 / CIP 104116 / JCM 14847 / LMG 12228 / 1C / PRS 101 / PAO1).